Reading from the N-terminus, the 282-residue chain is MEQKYEEDIQKLQQEIEMLEAEQEETLRSIFVQHGDRLQQGVKSACEERGGGGAQQHAVSKLITEVRELEKDLRRQTEINGITLNECFVKTLHKSERKLVQQLRLAGHCGLLLFQVEFAVTEIQEDNVLHRRVTELNIVVDGVEFKDFSAFVSRVEDTKDLLLFFRTLRTFSERCEDRRQTFQHFQEKYPDVVNLPEGCRSEIMIIRSPQLPGISMTLFWKIHVSKEGVVKPLLDLLLKMPDQALELDTKKVMEKGSDYFQSLLQLLGVEASIEGLIRAVCS.

Residues Met-1–Asn-80 are a coiled coil.

It belongs to the CENP-P/CTF19 family.

The protein localises to the nucleus. It is found in the chromosome. The protein resides in the centromere. Functionally, probable component of a centromeric complex involved in assembly of kinetochore proteins, mitotic progression and chromosome segregation. The polypeptide is Centromere protein P (cenpp) (Danio rerio (Zebrafish)).